We begin with the raw amino-acid sequence, 95 residues long: Small ribosomal subunit protein uS19 (95 aa).

A disordered region spans residues 75–95 (APTRSFRGHGGKKADKRGKMK). The span at 80–95 (FRGHGGKKADKRGKMK) shows a compositional bias: basic residues.

The protein belongs to the universal ribosomal protein uS19 family.

Its function is as follows. Protein S19 forms a complex with S13 that binds strongly to the 16S ribosomal RNA. In Roseiflexus sp. (strain RS-1), this protein is Small ribosomal subunit protein uS19.